The sequence spans 211 residues: Ribonuclease HII (211 aa).

An RNase H type-2 domain is found at 11–200 (EFIAGVDEVG…VKKLLSTLLS (190 aa)). A divalent metal cation-binding residues include Asp17, Glu18, and Asp109.

This sequence belongs to the RNase HII family. The cofactor is Mn(2+). Mg(2+) serves as cofactor.

It is found in the cytoplasm. It carries out the reaction Endonucleolytic cleavage to 5'-phosphomonoester.. Functionally, endonuclease that specifically degrades the RNA of RNA-DNA hybrids. The polypeptide is Ribonuclease HII (Histophilus somni (strain 2336) (Haemophilus somnus)).